A 107-amino-acid chain; its full sequence is Putative double-stranded DNA mimic protein NTHI1680 (107 aa).

The protein belongs to the putative dsDNA mimic protein family.

May act as a double-stranded DNA (dsDNA) mimic. Probably regulates the activity of a dsDNA-binding protein. This chain is Putative double-stranded DNA mimic protein NTHI1680, found in Haemophilus influenzae (strain 86-028NP).